A 236-amino-acid chain; its full sequence is Small ribosomal subunit protein uS3 (236 aa).

The KH type-2 domain occupies 39–107; that stretch reads IRLYVLEELK…ETSLNIVEIH (69 aa).

This sequence belongs to the universal ribosomal protein uS3 family. Part of the 30S ribosomal subunit. Forms a tight complex with proteins S10 and S14.

Its function is as follows. Binds the lower part of the 30S subunit head. Binds mRNA in the 70S ribosome, positioning it for translation. In Bartonella quintana (strain Toulouse) (Rochalimaea quintana), this protein is Small ribosomal subunit protein uS3.